Reading from the N-terminus, the 447-residue chain is Phosphoglucosamine mutase (447 aa).

The Phosphoserine intermediate role is filled by Ser-105. Ser-105, Asp-244, Asp-246, and Asp-248 together coordinate Mg(2+). At Ser-105 the chain carries Phosphoserine.

This sequence belongs to the phosphohexose mutase family. The cofactor is Mg(2+). In terms of processing, activated by phosphorylation.

The catalysed reaction is alpha-D-glucosamine 1-phosphate = D-glucosamine 6-phosphate. Functionally, catalyzes the conversion of glucosamine-6-phosphate to glucosamine-1-phosphate. This chain is Phosphoglucosamine mutase, found in Polynucleobacter asymbioticus (strain DSM 18221 / CIP 109841 / QLW-P1DMWA-1) (Polynucleobacter necessarius subsp. asymbioticus).